A 186-amino-acid chain; its full sequence is Tetratricopeptide repeat protein 36 (186 aa).

3 TPR repeats span residues 48-81 (SKAL…LPDR), 83-115 (SAYN…SGGR), and 120-153 (RQSF…GSPF).

The protein belongs to the TTC36 family.

This chain is Tetratricopeptide repeat protein 36 (Ttc36), found in Mus musculus (Mouse).